The following is a 287-amino-acid chain: Probable ABC transporter extracellular-binding protein YckB (287 aa).

Positions 1–24 are cleaved as a signal peptide; the sequence is MKSFMHSKAVIFSFTMAFFLILAA. Residue cysteine 25 is the site of N-palmitoyl cysteine attachment. Cysteine 25 carries the S-diacylglycerol cysteine lipid modification.

It belongs to the bacterial solute-binding protein 3 family.

It is found in the cell membrane. In terms of biological role, probably part of a binding-protein-dependent transport system. The protein is Probable ABC transporter extracellular-binding protein YckB (yckB) of Bacillus subtilis (strain 168).